Here is a 206-residue protein sequence, read N- to C-terminus: Small ribosomal subunit protein uS4 (206 aa).

An S4 RNA-binding domain is found at 96–158 (SRLDNVVYRM…AKGQLRIKGA (63 aa)).

This sequence belongs to the universal ribosomal protein uS4 family. In terms of assembly, part of the 30S ribosomal subunit. Contacts protein S5. The interaction surface between S4 and S5 is involved in control of translational fidelity.

In terms of biological role, one of the primary rRNA binding proteins, it binds directly to 16S rRNA where it nucleates assembly of the body of the 30S subunit. With S5 and S12 plays an important role in translational accuracy. The polypeptide is Small ribosomal subunit protein uS4 (Coxiella burnetii (strain CbuK_Q154) (Coxiella burnetii (strain Q154))).